A 565-amino-acid polypeptide reads, in one-letter code: Estrogen receptor gamma (565 aa).

The tract at residues 1–168 is modulating; that stretch reads MAVASSPEKD…TSGGKTDLHY (168 aa). NR C4-type zinc fingers lie at residues 169–189 and 205–229; these read CAVCHDYASGYHYGVWSCEGC and CPATNECTIDKNRRKSCQACRLRKC. The nuclear receptor DNA-binding region spans 169–234; it reads CAVCHDYASG…RLRKCYEVGM (66 aa). Residues 235 to 285 form a hinge region; sequence TKCGMRKERGNYRSPQMRRMTRLTSQGRTDSSSVLTGSAVVSLNAPQPSAL. The NR LBD domain maps to 286–516; it reads TSEQLIERLM…DLLLEMLDAH (231 aa). Residues 522–565 are disordered; that stretch reads RLPRRSPEQEPEDQADAPAPPHSSGSGPSYTWTPSSSEGAGEPQ.

It belongs to the nuclear hormone receptor family. NR3 subfamily. As to quaternary structure, homodimer. As to expression, abundant in the ovary and testes, barely detectable in the brain and muscle and undetectable in the liver.

It is found in the nucleus. In terms of biological role, the steroid hormones and their receptors are involved in the regulation of eukaryotic gene expression and affect cellular proliferation and differentiation in target tissues. The protein is Estrogen receptor gamma (esr3) of Micropogonias undulatus (Atlantic croaker).